Consider the following 208-residue polypeptide: LexA repressor (208 aa).

The segment at residues 29–49 (VREICGAVGLSSTSTVHGHIN) is a DNA-binding region (H-T-H motif). Catalysis depends on for autocatalytic cleavage activity residues serine 129 and lysine 167.

It belongs to the peptidase S24 family. As to quaternary structure, homodimer.

The enzyme catalyses Hydrolysis of Ala-|-Gly bond in repressor LexA.. Functionally, represses a number of genes involved in the response to DNA damage (SOS response), including recA and lexA. In the presence of single-stranded DNA, RecA interacts with LexA causing an autocatalytic cleavage which disrupts the DNA-binding part of LexA, leading to derepression of the SOS regulon and eventually DNA repair. The polypeptide is LexA repressor (Limosilactobacillus fermentum (strain NBRC 3956 / LMG 18251) (Lactobacillus fermentum)).